A 166-amino-acid polypeptide reads, in one-letter code: uncharacterized protein (166 aa).

This is an uncharacterized protein from Orgyia pseudotsugata (Douglas-fir tussock moth).